A 528-amino-acid polypeptide reads, in one-letter code: Apolipoprotein N-acyltransferase (528 aa).

5 helical membrane-spanning segments follow: residues 8–28, 69–89, 99–119, 178–198, and 203–223; these read IMLL…AVGA, AFWI…WWLG, FAWA…VFYG, VLGL…PALL, and GAKL…GYGA. The region spanning 241 to 490 is the CN hydrolase domain; it reads VQPNIDQAAK…EGVENATFTL (250 aa). Glu-285 functions as the Proton acceptor in the catalytic mechanism. The active site involves Lys-349. The active-site Nucleophile is the Cys-402.

This sequence belongs to the CN hydrolase family. Apolipoprotein N-acyltransferase subfamily.

It localises to the cell inner membrane. The catalysed reaction is N-terminal S-1,2-diacyl-sn-glyceryl-L-cysteinyl-[lipoprotein] + a glycerophospholipid = N-acyl-S-1,2-diacyl-sn-glyceryl-L-cysteinyl-[lipoprotein] + a 2-acyl-sn-glycero-3-phospholipid + H(+). It functions in the pathway protein modification; lipoprotein biosynthesis (N-acyl transfer). Functionally, catalyzes the phospholipid dependent N-acylation of the N-terminal cysteine of apolipoprotein, the last step in lipoprotein maturation. In Allorhizobium ampelinum (strain ATCC BAA-846 / DSM 112012 / S4) (Agrobacterium vitis (strain S4)), this protein is Apolipoprotein N-acyltransferase.